Reading from the N-terminus, the 72-residue chain is Translation initiation factor IF-1 (72 aa).

An S1-like domain is found at 1–72 (MTKEDCIEMQ…SKGRIIFRSR (72 aa)).

It belongs to the IF-1 family. In terms of assembly, component of the 30S ribosomal translation pre-initiation complex which assembles on the 30S ribosome in the order IF-2 and IF-3, IF-1 and N-formylmethionyl-tRNA(fMet); mRNA recruitment can occur at any time during PIC assembly.

Its subcellular location is the cytoplasm. In terms of biological role, one of the essential components for the initiation of protein synthesis. Stabilizes the binding of IF-2 and IF-3 on the 30S subunit to which N-formylmethionyl-tRNA(fMet) subsequently binds. Helps modulate mRNA selection, yielding the 30S pre-initiation complex (PIC). Upon addition of the 50S ribosomal subunit IF-1, IF-2 and IF-3 are released leaving the mature 70S translation initiation complex. This is Translation initiation factor IF-1 from Buchnera aphidicola subsp. Baizongia pistaciae (strain Bp).